A 56-amino-acid polypeptide reads, in one-letter code: Small ribosomal subunit protein eS31 (56 aa).

Zn(2+) is bound by residues C28, C31, C46, and C49. Residues 28 to 49 (CPRCGPGVFMANHKDRWSCGRC) form a C4-type zinc finger.

This sequence belongs to the eukaryotic ribosomal protein eS31 family. Part of the 30S ribosomal subunit. Requires Zn(2+) as cofactor.

The chain is Small ribosomal subunit protein eS31 from Thermococcus gammatolerans (strain DSM 15229 / JCM 11827 / EJ3).